We begin with the raw amino-acid sequence, 108 residues long: Insulin (108 aa).

The first 23 residues, 1-23 (MALWILLPLLALLILWGPDPAQA), serve as a signal peptide directing secretion. 2 cysteine pairs are disulfide-bonded: C30/C94 and C43/C107. Positions 57-88 (EVEDPQVGQVELGAGPGAGSEQTLALEVARQA) are cleaved as a propeptide — c peptide.

Belongs to the insulin family. As to quaternary structure, heterodimer of a B chain and an A chain linked by two disulfide bonds.

The protein localises to the secreted. Functionally, insulin decreases blood glucose concentration. It increases cell permeability to monosaccharides, amino acids and fatty acids. It accelerates glycolysis, the pentose phosphate cycle, and glycogen synthesis in liver. This chain is Insulin (INS), found in Rodentia sp.